Reading from the N-terminus, the 314-residue chain is Methionyl-tRNA formyltransferase (314 aa).

(6S)-5,6,7,8-tetrahydrofolate is bound at residue 110–113 (SLLP).

The protein belongs to the Fmt family.

It catalyses the reaction L-methionyl-tRNA(fMet) + (6R)-10-formyltetrahydrofolate = N-formyl-L-methionyl-tRNA(fMet) + (6S)-5,6,7,8-tetrahydrofolate + H(+). In terms of biological role, attaches a formyl group to the free amino group of methionyl-tRNA(fMet). The formyl group appears to play a dual role in the initiator identity of N-formylmethionyl-tRNA by promoting its recognition by IF2 and preventing the misappropriation of this tRNA by the elongation apparatus. The polypeptide is Methionyl-tRNA formyltransferase (Bacillus cereus (strain G9842)).